Consider the following 32-residue polypeptide: Mu-theraphotoxin-Se1a (32 aa).

Cystine bridges form between Cys-2/Cys-17, Cys-9/Cys-22, and Cys-16/Cys-28.

This sequence belongs to the neurotoxin 10 (Hwtx-1) family. Expressed by the venom gland.

Its subcellular location is the secreted. Functionally, voltage-gated sodium channel Nav1.7/SCN9A inhibitor. In Selenocosmia effera (Tarantula spider), this protein is Mu-theraphotoxin-Se1a.